The primary structure comprises 259 residues: Thiazole synthase (259 aa).

The Schiff-base intermediate with DXP role is filled by K95. Residues G156, 182-183 (AG), and 204-205 (NT) contribute to the 1-deoxy-D-xylulose 5-phosphate site.

Belongs to the ThiG family. As to quaternary structure, homotetramer. Forms heterodimers with either ThiH or ThiS.

The protein resides in the cytoplasm. It catalyses the reaction [ThiS sulfur-carrier protein]-C-terminal-Gly-aminoethanethioate + 2-iminoacetate + 1-deoxy-D-xylulose 5-phosphate = [ThiS sulfur-carrier protein]-C-terminal Gly-Gly + 2-[(2R,5Z)-2-carboxy-4-methylthiazol-5(2H)-ylidene]ethyl phosphate + 2 H2O + H(+). It participates in cofactor biosynthesis; thiamine diphosphate biosynthesis. Its function is as follows. Catalyzes the rearrangement of 1-deoxy-D-xylulose 5-phosphate (DXP) to produce the thiazole phosphate moiety of thiamine. Sulfur is provided by the thiocarboxylate moiety of the carrier protein ThiS. In vitro, sulfur can be provided by H(2)S. The polypeptide is Thiazole synthase (Proteus mirabilis (strain HI4320)).